The following is a 924-amino-acid chain: DNA repair and recombination protein RDH54 (924 aa).

Positions 1-10 (MQIPKYENKP) are enriched in basic and acidic residues. 2 disordered regions span residues 1 to 21 (MQIPKYENKPFKPPRRVGSNK) and 155 to 182 (EALSQNMGNPNPPTTSTTETVPSTKNDG). The span at 168-178 (TTSTTETVPST) shows a compositional bias: low complexity. Residues 299–487 (LENDSDISGC…FTIIDFINPG (189 aa)) enclose the Helicase ATP-binding domain. Position 346–353 (346–353 (IPLTGLCK)) interacts with ATP. The DEGH box signature appears at 472 to 475 (NDLN). Residue Lys615 forms a Glycyl lysine isopeptide (Lys-Gly) (interchain with G-Cter in ubiquitin) linkage. A Helicase C-terminal domain is found at 631–790 (KLRVLMTLLE…DSEMRNKESS (160 aa)).

It belongs to the SNF2/RAD54 helicase family. In terms of assembly, interacts with RAD51 and DMC1.

The protein resides in the nucleus. It catalyses the reaction ATP + H2O = ADP + phosphate + H(+). Involved in the recombinational repair of double-strand breaks (DSB) in DNA during mitosis and meiosis. Has DNA dependent ATPase activity. Promotes D-loop (displacement loop) formation with RAD51 recombinase. Modifies the topology of double-stranded DNA during the D-loop reaction to facilitate the invasion of the homologous duplex molecule by the initiating single-stranded DNA substrate. Required for adaptation from G2/M checkpoint arrest induced by a double strand break, by participating in monitoring the extent of single-stranded DNA produced by resection of DNA ends. This role is distinct from its roles in recombination. Promotes colocalization of RAD51 and DMC1 during meiotic recombination. Involved in crossover interference. The chain is DNA repair and recombination protein RDH54 (RDH54) from Saccharomyces cerevisiae (strain AWRI1631) (Baker's yeast).